We begin with the raw amino-acid sequence, 520 residues long: MTEISILNDVQKIIVLDYGSQYNQLIARRIREFGVFSELKSHKITAQELREINPIGIVLSGGPNSVYADNAFGIDPEIFELGIPILGICYGMQLITHKLGGKVVPAGQAGNREYGQSTLHLRETSKLFSGTPQEQLVLMSHGDAVTEIPEGFHLVGDSNDCPYAAIENTEKNLYGIQFHPEVRHSVYGNDILKNFAISICGARGDWSMDNFIDMEIAKIRETVGDRKVLLGLSGGVDSSVVGVLLQKAIGDQLTCIFVDHGLLRKDEGDQVMGMLGGKFGLNIIRVDASKRFLDLLADVEDPEKKRKIIGNEFVYVFDDEASKLKGVDFLAQGTLYTDIIESGTETAQTIKSHHNVGGLPEDMQFELIEPLNTLFKDEVRALGIALGMPEEIVWRQPFPGPGLAIRVMGAITEEKLETVRESDAILREEIAKAGLDRDVWQYFTVNTGVRSVGVMGDGRTYDYTIAIRAITSIDGMTADFAQLPWDVLKKISTRIVNEVDHVNRIVYDITSKPPATVEWE.

One can recognise a Glutamine amidotransferase type-1 domain in the interval Lys12 to Asp205. Catalysis depends on Cys89, which acts as the Nucleophile. Residues His179 and Glu181 contribute to the active site. Residues Trp206–Arg395 enclose the GMPS ATP-PPase domain. Ser233–Ser239 is an ATP binding site.

In terms of assembly, homodimer.

The enzyme catalyses XMP + L-glutamine + ATP + H2O = GMP + L-glutamate + AMP + diphosphate + 2 H(+). It participates in purine metabolism; GMP biosynthesis; GMP from XMP (L-Gln route): step 1/1. Catalyzes the synthesis of GMP from XMP. This is GMP synthase [glutamine-hydrolyzing] from Streptococcus pyogenes serotype M1.